The primary structure comprises 314 residues: 3'-5' exoribonuclease YhaM (314 aa).

Positions 163 to 279 (HVVSMLDLAK…LHYIDNLDAK (117 aa)) constitute an HD domain.

The protein belongs to the YhaM family.

Functionally, shows a 3'-5' exoribonuclease activity. This is 3'-5' exoribonuclease YhaM from Bacillus thuringiensis (strain Al Hakam).